The sequence spans 963 residues: MWCLHCNSERTQSLLELELDSGVEGEAPSSETGTSLDSPSAYPQGPLVPGSSLSPDHYEHTSVGAYGLYSGPPGQQQRTRRPKLQHSTSILRKQAEEEAIKRSRSLSESYELSSDLQDKQVEMLERKYGGRLVTRHAARTIQTAFRQYQMNKNFERLRSSMSENRMSRRIVLSNMRMQFSFEGPEKVHSSYFEGKQVSVTNDGSQLGALVSPECGDLSEPTTLKSPAPSSDFADAITELEDAFSRQVKSLAESIDDALNCRSLHTEEAPALDAARARDTEPQTALHGMDHRKLDEMTASYSDVTLYIDEEELSPPLPLSQAGDRPSSTESDLRLRAGGAAPDYWALAHKEDKADTDTSCRSTPSLERQEQRLRVEHLPLLTIEPPSDSSVDLSDRSERGSLKRQSAYERSLGGQQGSPKHGPHSGAPKSLPREEPELRPRPPRPLDSHLAINGSANRQSKSESDYSDGDNDSINSTSNSNDTINCSSESSSRDSLREQTLSKQTYHKEARNSWDSPAFSNDVIRKRHYRIGLNLFNKKPEKGVQYLIERGFVPDTPVGVAHFLLQRKGLSRQMIGEFLGNRQKQFNRDVLDCVVDEMDFSTMELDEALRKFQAHIRVQGEAQKVERLIEAFSQRYCICNPGVVRQFRNPDTIFILAFAIILLNTDMYSPNVKPERKMKLEDFIKNLRGVDDGEDIPREMLMGIYERIRKRELKTNEDHVSQVQKVEKLIVGKKPIGSLHPGLGCVLSLPHRRLVCYCRLFEVPDPNKPQKLGLHQREIFLFNDLLVVTKIFQKKKNSVTYSFRQSFSLYGMQVLLFENQYYPNGIRLTSSVPGADIKVLINFNAPNPQDRKKFTDDLRESIAEVQEMEKHRIESELEKQKGVVRPSMSQCSSLKKESGNGTLSRACLDDSYASGEGLKRSALSSSLRDLSEAGKRGRRSSAGSLESNVEFQPFEPLQPSVLCS.

Positions 21-88 (SGVEGEAPSS…TRRPKLQHST (68 aa)) are disordered. The span at 29-38 (SSETGTSLDS) shows a compositional bias: polar residues. Phosphoserine is present on residues Ser89, Ser105, and Ser107. The IQ domain occupies 134–163 (TRHAARTIQTAFRQYQMNKNFERLRSSMSE). Phosphoserine occurs at positions 180, 249, and 253. Disordered regions lie at residues 312–332 (LSPPLPLSQAGDRPSSTESDL) and 349–513 (KEDK…RNSW). 2 stretches are compositionally biased toward basic and acidic residues: residues 366-376 (ERQEQRLRVEH) and 430-446 (LPREEPELRPRPPRPLD). The segment covering 471 to 489 (DSINSTSNSNDTINCSSES) has biased composition (low complexity). Residues Ser512 and Ser515 each carry the phosphoserine modification. The SEC7 domain occupies 517-710 (AFSNDVIRKR…MGIYERIRKR (194 aa)). The 93-residue stretch at 774–866 (HQREIFLFND…LRESIAEVQE (93 aa)) folds into the PH domain. Residues 848–879 (QDRKKFTDDLRESIAEVQEMEKHRIESELEKQ) adopt a coiled-coil conformation. At Ser892 the chain carries Phosphoserine. Tyr911 bears the Phosphotyrosine mark. Positions 922–947 (LSSSLRDLSEAGKRGRRSSAGSLESN) are disordered. Phosphoserine is present on residues Ser924 and Ser925.

It belongs to the BRAG family. In terms of assembly, interacts with ARF1 and ARF6. Interacts with GRIA2; the interaction is required for ARF6 activation. As to expression, expressed in brain, ovary, heart, lung, liver, kidney and leukocytes. Moderate expression was also detected in lung, skeletal muscle, placenta, small intestine, pancreas, spleen and testis.

The protein resides in the cytoplasm. The protein localises to the nucleus. Its subcellular location is the postsynaptic density. It localises to the cytoplasmic vesicle. It is found in the secretory vesicle. The protein resides in the synaptic vesicle. In terms of biological role, guanine nucleotide exchange factor for ARF1 and ARF6. Guanine nucleotide exchange factor activity is enhanced by lipid binding. Accelerates GTP binding by ARFs of all three classes. Guanine nucleotide exchange protein for ARF6, mediating internalization of beta-1 integrin. Involved in neuronal development. In neurons, plays a role in the control of vesicle formation by endocytoc cargo. Upon long term depression, interacts with GRIA2 and mediates the activation of ARF6 to internalize synaptic AMPAR receptors. In Homo sapiens (Human), this protein is IQ motif and SEC7 domain-containing protein 1.